Here is a 74-residue protein sequence, read N- to C-terminus: uncharacterized protein (74 aa).

A helical membrane pass occupies residues 52 to 72 (ITFGFTVLGLGIGMIFGDAGL).

It is found in the membrane. This is an uncharacterized protein from Methanocaldococcus jannaschii (strain ATCC 43067 / DSM 2661 / JAL-1 / JCM 10045 / NBRC 100440) (Methanococcus jannaschii).